Consider the following 198-residue polypeptide: Sensory transduction protein RegX3 (198 aa).

In terms of domain architecture, Response regulatory spans 1 to 87; sequence MVTDGPAALA…ELIARIRAVL (87 aa). At D23 the chain carries 4-aspartylphosphate. The segment at residues 99–198 is a DNA-binding region (ompR/PhoB-type); sequence DGVLESGPLR…VRGLGYKLES (100 aa).

Phosphorylated by SenX3.

Its function is as follows. Member of the two-component regulatory system SenX3/RegX3. This Mycobacterium leprae (strain TN) protein is Sensory transduction protein RegX3 (rgx3).